The following is a 536-amino-acid chain: Arylsulfatase (536 aa).

Aspartate 13, aspartate 14, and cysteine 51 together coordinate Ca(2+). Cysteine 51 functions as the Nucleophile in the catalytic mechanism. At cysteine 51 the chain carries 3-oxoalanine (Cys). Histidine 115 is a catalytic residue. Aspartate 317 and asparagine 318 together coordinate Ca(2+).

This sequence belongs to the sulfatase family. As to quaternary structure, monomer. Requires Ca(2+) as cofactor. In terms of processing, the conversion to 3-oxoalanine (also known as C-formylglycine, FGly), of a serine or cysteine residue in prokaryotes and of a cysteine residue in eukaryotes, is critical for catalytic activity.

Its subcellular location is the cytoplasm. It carries out the reaction an aryl sulfate + H2O = a phenol + sulfate + H(+). Hydrolyzes the bond between sulfate and the aromatic ring in a compound such as 4-nitrocatechol sulfate. This is Arylsulfatase (atsA) from Pseudomonas aeruginosa (strain ATCC 15692 / DSM 22644 / CIP 104116 / JCM 14847 / LMG 12228 / 1C / PRS 101 / PAO1).